The primary structure comprises 98 residues: Large ribosomal subunit protein bL28 (98 aa).

As to quaternary structure, part of the 50S ribosomal subunit.

In Thermus thermophilus (strain ATCC 27634 / DSM 579 / HB8), this protein is Large ribosomal subunit protein bL28 (rpmB).